A 250-amino-acid chain; its full sequence is Ubiquinone/menaquinone biosynthesis C-methyltransferase UbiE (250 aa).

Residues Thr-73, Asp-94, 122–123 (NA), and Ser-139 contribute to the S-adenosyl-L-methionine site.

It belongs to the class I-like SAM-binding methyltransferase superfamily. MenG/UbiE family.

The catalysed reaction is a 2-demethylmenaquinol + S-adenosyl-L-methionine = a menaquinol + S-adenosyl-L-homocysteine + H(+). It catalyses the reaction a 2-methoxy-6-(all-trans-polyprenyl)benzene-1,4-diol + S-adenosyl-L-methionine = a 5-methoxy-2-methyl-3-(all-trans-polyprenyl)benzene-1,4-diol + S-adenosyl-L-homocysteine + H(+). The protein operates within quinol/quinone metabolism; menaquinone biosynthesis; menaquinol from 1,4-dihydroxy-2-naphthoate: step 2/2. It functions in the pathway cofactor biosynthesis; ubiquinone biosynthesis. Methyltransferase required for the conversion of demethylmenaquinol (DMKH2) to menaquinol (MKH2) and the conversion of 2-polyprenyl-6-methoxy-1,4-benzoquinol (DDMQH2) to 2-polyprenyl-3-methyl-6-methoxy-1,4-benzoquinol (DMQH2). The chain is Ubiquinone/menaquinone biosynthesis C-methyltransferase UbiE from Francisella tularensis subsp. holarctica (strain FTNF002-00 / FTA).